The chain runs to 372 residues: Chaperone protein DnaJ (372 aa).

Positions 5-70 (DYYEVLGVAK…DKRAAYDQFG (66 aa)) constitute a J domain. The CR-type zinc-finger motif lies at 133–211 (GTETKIRIPT…CHGEGRVKKH (79 aa)). Residues C146, C149, C163, C166, C185, C188, C199, and C202 each coordinate Zn(2+). 4 CXXCXGXG motif repeats span residues 146–153 (CGTCHGSG), 163–170 (CSACGGHG), 185–192 (CPRCGGTG), and 199–206 (CPSCHGEG).

It belongs to the DnaJ family. As to quaternary structure, homodimer. It depends on Zn(2+) as a cofactor.

The protein localises to the cytoplasm. In terms of biological role, participates actively in the response to hyperosmotic and heat shock by preventing the aggregation of stress-denatured proteins and by disaggregating proteins, also in an autonomous, DnaK-independent fashion. Unfolded proteins bind initially to DnaJ; upon interaction with the DnaJ-bound protein, DnaK hydrolyzes its bound ATP, resulting in the formation of a stable complex. GrpE releases ADP from DnaK; ATP binding to DnaK triggers the release of the substrate protein, thus completing the reaction cycle. Several rounds of ATP-dependent interactions between DnaJ, DnaK and GrpE are required for fully efficient folding. Also involved, together with DnaK and GrpE, in the DNA replication of plasmids through activation of initiation proteins. The chain is Chaperone protein DnaJ from Thiobacillus denitrificans (strain ATCC 25259 / T1).